The sequence spans 266 residues: Indole-3-glycerol phosphate synthase (266 aa).

This sequence belongs to the TrpC family.

It carries out the reaction 1-(2-carboxyphenylamino)-1-deoxy-D-ribulose 5-phosphate + H(+) = (1S,2R)-1-C-(indol-3-yl)glycerol 3-phosphate + CO2 + H2O. It functions in the pathway amino-acid biosynthesis; L-tryptophan biosynthesis; L-tryptophan from chorismate: step 4/5. The polypeptide is Indole-3-glycerol phosphate synthase (Opitutus terrae (strain DSM 11246 / JCM 15787 / PB90-1)).